The chain runs to 72 residues: Translation initiation factor IF-1 (72 aa).

One can recognise an S1-like domain in the interval 1–72 (MAKEDCIEME…TKGRIKFRSK (72 aa)).

It belongs to the IF-1 family. As to quaternary structure, component of the 30S ribosomal translation pre-initiation complex which assembles on the 30S ribosome in the order IF-2 and IF-3, IF-1 and N-formylmethionyl-tRNA(fMet); mRNA recruitment can occur at any time during PIC assembly.

Its subcellular location is the cytoplasm. Its function is as follows. One of the essential components for the initiation of protein synthesis. Stabilizes the binding of IF-2 and IF-3 on the 30S subunit to which N-formylmethionyl-tRNA(fMet) subsequently binds. Helps modulate mRNA selection, yielding the 30S pre-initiation complex (PIC). Upon addition of the 50S ribosomal subunit IF-1, IF-2 and IF-3 are released leaving the mature 70S translation initiation complex. This is Translation initiation factor IF-1 from Francisella tularensis subsp. tularensis (strain WY96-3418).